A 99-amino-acid polypeptide reads, in one-letter code: Large ribosomal subunit protein bL27 (99 aa).

Positions 1–9 (MLIMNLQLF) are excised as a propeptide.

It belongs to the bacterial ribosomal protein bL27 family. Post-translationally, the N-terminus is cleaved by ribosomal processing cysteine protease Prp.

The protein is Large ribosomal subunit protein bL27 of Clostridium botulinum (strain Eklund 17B / Type B).